Consider the following 142-residue polypeptide: Large ribosomal subunit protein uL13 (142 aa).

Belongs to the universal ribosomal protein uL13 family. In terms of assembly, part of the 50S ribosomal subunit.

Its function is as follows. This protein is one of the early assembly proteins of the 50S ribosomal subunit, although it is not seen to bind rRNA by itself. It is important during the early stages of 50S assembly. The protein is Large ribosomal subunit protein uL13 of Pseudomonas aeruginosa (strain LESB58).